The primary structure comprises 681 residues: Elongation factor G (681 aa).

Residues 5 to 279 (KNIRNIGIIA…SIVNFLPSPI (275 aa)) form the tr-type G domain. GTP-binding positions include 14 to 21 (AHVDAGKT), 82 to 86 (DTPGH), and 136 to 139 (NKLD).

It belongs to the TRAFAC class translation factor GTPase superfamily. Classic translation factor GTPase family. EF-G/EF-2 subfamily.

It localises to the cytoplasm. Functionally, catalyzes the GTP-dependent ribosomal translocation step during translation elongation. During this step, the ribosome changes from the pre-translocational (PRE) to the post-translocational (POST) state as the newly formed A-site-bound peptidyl-tRNA and P-site-bound deacylated tRNA move to the P and E sites, respectively. Catalyzes the coordinated movement of the two tRNA molecules, the mRNA and conformational changes in the ribosome. The sequence is that of Elongation factor G from Carsonella ruddii (strain PV).